The following is a 136-amino-acid chain: Histone H3.2 (136 aa).

Residues 1–43 form a disordered region; it reads MARTKQTARKSTGGKAPRKQLATKAARKSAPATGGVKKPHRFR. Position 5 is an N6-methylated lysine (Lys5). Lys10 is subject to N6-acetyllysine; alternate. Lys10 carries the N6-methylated lysine; alternate modification. Ser11 is modified (phosphoserine). Thr12 carries the phosphothreonine modification. Residue Lys15 is modified to N6-acetyllysine. Lys19 and Lys24 each carry N6-acetyllysine; alternate. Lys19 and Lys24 each carry N6-methylated lysine; alternate. Lys28 is modified (N6-methylated lysine). Ser29 bears the Phosphoserine mark. Position 37 is an N6-methylated lysine (Lys37).

The protein belongs to the histone H3 family. In terms of assembly, the nucleosome is a histone octamer containing two molecules each of H2A, H2B, H3 and H4 assembled in one H3-H4 heterotetramer and two H2A-H2B heterodimers. The octamer wraps approximately 147 bp of DNA. Post-translationally, acetylation is generally linked to gene activation. Can be acetylated to form H3K9ac, H3K14ac, H3K18ac and H3K23ac. H3K9ac could compete with H3K9me and prevent gene silencing. H3K9ac is restricted to euchromatin. Methylated to form mainly H3K4me, H3K9me, H3K18me, H3K23me, H3K27me and H3K36me. H3K4me1/2/3, H3K9me3, H3K27me3 and H3K36me1/2/3 are typical marks for euchromatin, whereas heterochromatic chromocenters are enriched in H3K9me1/2 and H3K27me1/2. H2BK143ub1 is probably prerequisite for H3K4me. In terms of processing, can be phosphorylated to form H3S10ph, H3T11ph and H3S28ph.

It localises to the nucleus. The protein localises to the chromosome. In terms of biological role, core component of nucleosome. Nucleosomes wrap and compact DNA into chromatin, limiting DNA accessibility to the cellular machineries which require DNA as a template. Histones thereby play a central role in transcription regulation, DNA repair, DNA replication and chromosomal stability. DNA accessibility is regulated via a complex set of post-translational modifications of histones, also called histone code, and nucleosome remodeling. This Triticum aestivum (Wheat) protein is Histone H3.2.